We begin with the raw amino-acid sequence, 476 residues long: Lactate utilization protein B (476 aa).

2 consecutive 4Fe-4S ferredoxin-type domains span residues 304–334 (GTEF…GHSY) and 353–382 (YDDY…LHEL). Positions 313, 316, 319, 323, 366, 369, and 373 each coordinate [4Fe-4S] cluster.

It belongs to the LutB/YkgF family.

In terms of biological role, is involved in L-lactate degradation and allows cells to grow with lactate as the sole carbon source. Has probably a role as an electron transporter during oxidation of L-lactate. This Geobacillus thermodenitrificans (strain NG80-2) protein is Lactate utilization protein B.